The primary structure comprises 279 residues: 3-methyl-2-oxobutanoate hydroxymethyltransferase (279 aa).

The Mg(2+) site is built by Asp-43 and Asp-82. Residues 43 to 44, Asp-82, and Lys-112 each bind 3-methyl-2-oxobutanoate; that span reads DS. Glu-114 contributes to the Mg(2+) binding site. The active-site Proton acceptor is Glu-181.

It belongs to the PanB family. As to quaternary structure, homodecamer; pentamer of dimers. Mg(2+) is required as a cofactor.

The protein localises to the cytoplasm. It carries out the reaction 3-methyl-2-oxobutanoate + (6R)-5,10-methylene-5,6,7,8-tetrahydrofolate + H2O = 2-dehydropantoate + (6S)-5,6,7,8-tetrahydrofolate. Its pathway is cofactor biosynthesis; (R)-pantothenate biosynthesis; (R)-pantoate from 3-methyl-2-oxobutanoate: step 1/2. Catalyzes the reversible reaction in which hydroxymethyl group from 5,10-methylenetetrahydrofolate is transferred onto alpha-ketoisovalerate to form ketopantoate. This Lysinibacillus sphaericus (strain C3-41) protein is 3-methyl-2-oxobutanoate hydroxymethyltransferase.